Consider the following 351-residue polypeptide: Glycerol-1-phosphate dehydrogenase [NAD(P)+] (351 aa).

NAD(+)-binding positions include 97 to 101 and 119 to 122; these read GKVID and TSPS. D124 is a substrate binding site. S128 contacts NAD(+). Residue D171 participates in substrate binding. D171 and H251 together coordinate Zn(2+). H255 provides a ligand contact to substrate. Residue H267 coordinates Zn(2+).

The protein belongs to the glycerol-1-phosphate dehydrogenase family. As to quaternary structure, homodimer. Zn(2+) serves as cofactor.

The protein resides in the cytoplasm. The enzyme catalyses sn-glycerol 1-phosphate + NAD(+) = dihydroxyacetone phosphate + NADH + H(+). It carries out the reaction sn-glycerol 1-phosphate + NADP(+) = dihydroxyacetone phosphate + NADPH + H(+). It functions in the pathway membrane lipid metabolism; glycerophospholipid metabolism. In terms of biological role, catalyzes the NAD(P)H-dependent reduction of dihydroxyacetonephosphate (DHAP or glycerone phosphate) to glycerol 1-phosphate (G1P). The G1P thus generated is used as the glycerophosphate backbone of phospholipids in the cellular membranes of Archaea. The chain is Glycerol-1-phosphate dehydrogenase [NAD(P)+] from Saccharolobus islandicus (strain Y.N.15.51 / Yellowstone #2) (Sulfolobus islandicus).